A 4328-amino-acid polypeptide reads, in one-letter code: Cadherin-4 (4328 aa).

The N-terminal stretch at 1-23 is a signal peptide; the sequence is MKKHRVFHLFLLIFCKAISLVTT. The Extracellular segment spans residues 24–4072; that stretch reads SSSTEQIFEF…TVLEFLLKAE (4049 aa). N-linked (GlcNAc...) asparagine glycans are attached at residues N39 and N56. 2 consecutive Cadherin domains span residues 108–153 and 156–275; these read PLNR…SPVF and GEQG…NPNI. N-linked (GlcNAc...) asparagine glycosylation is found at N196, N330, N339, N365, N431, N452, and N584. 11 consecutive Cadherin domains span residues 384–492, 507–608, 609–720, 721–826, 827–934, 935–1051, 1047–1156, 1175–1262, 1265–1363, 1364–1467, and 1476–1570; these read DNEK…APVF, PGDV…SPVF, SSFP…SPQF, DEVS…PPKC, VVQH…AIEF, DDVA…KPMY, KKPM…SPTF, RIFA…PPEI, KKSD…RPKF, SASH…SPYF, and VDES…APET. N-linked (GlcNAc...) asparagine glycans are attached at residues N811 and N899. The Cell attachment site motif lies at 1090–1092; the sequence is RGD. The N-linked (GlcNAc...) asparagine glycan is linked to N1192. A disordered region spans residues 1246-1267; sequence NSAGQKPRKSKNSPPEISGKKS. Residue N1335 is glycosylated (N-linked (GlcNAc...) asparagine). N1610 carries N-linked (GlcNAc...) asparagine glycosylation. The region spanning 1671–1784 is the Cadherin 14 domain; sequence RRQVYRGTIR…IDENDEPPRF (114 aa). Residue N1895 is glycosylated (N-linked (GlcNAc...) asparagine). The Cadherin 15 domain maps to 1917 to 1984; it reads FSIVNPHEAF…ENINDETPIF (68 aa). N2059, N2150, N2216, N2367, N2413, N2440, and N2535 each carry an N-linked (GlcNAc...) asparagine glycan. Cadherin domains are found at residues 2187–2285 and 2286–2397; these read EKLK…MPEF and IRSD…PPRF. 9 Cadherin domains span residues 2429-2505, 2506-2608, 2609-2712, 2719-2813, 2828-2915, 2913-3011, 3012-3113, 3114-3216, and 3217-3326; these read LQFS…PPFF, VLPF…VPRF, SNSH…APAF, FTIS…PPQF, SPIL…CPEA, PEAN…RPKI, IEKL…APTF, EKST…APKF, and EKEK…APTF. N-linked (GlcNAc...) asparagine glycosylation is found at N2844, N2916, N2941, N3083, and N3143. N-linked (GlcNAc...) asparagine glycosylation occurs at N3330. Cadherin domains follow at residues 3335-3428 and 3429-3554; these read VQEG…APTM and KPMK…VDEF. N3512 carries an N-linked (GlcNAc...) asparagine glycan. Residues 3706–3744 form the EGF-like 1 domain; sequence ETNQCAKSPCEQWQLCIPSVHNSTYECVCPLGMEGDKCS. Cystine bridges form between C3710–C3721, C3715–C3732, C3734–C3743, C3898–C3925, C3933–C3944, C3938–C3954, C3956–C3965, C3972–C3983, C3977–C3992, and C3994–C4003. A glycan (N-linked (GlcNAc...) asparagine) is linked at N3727. The 169-residue stretch at 3757–3925 folds into the Laminin G-like domain; sequence EAELSVGGDG…MKLFGAQPGC (169 aa). 2 consecutive EGF-like domains span residues 3929 to 3966 and 3968 to 4004; these read TSSP…NVCE and DLEP…KHCE. An N-linked (GlcNAc...) asparagine glycan is attached at N4043. A helical membrane pass occupies residues 4073 to 4093; that stretch reads IVIVILGVLLLLLVFCLTFIT. Residues 4094–4328 are Cytoplasmic-facing; sequence WKCCKKNRDP…IDEEVNIHIS (235 aa). Disordered stretches follow at residues 4143–4215 and 4268–4311; these read TSSV…SSLR and NFER…PISL. Basic and acidic residues predominate over residues 4178 to 4196; that stretch reads TRRDPLPSDKFRRVDETAN. Positions 4207-4209 match the Cell attachment site motif; the sequence is RGD.

In larvae and adult, it is expressed in various tissues including pharyngeal muscle, hypodermis and gonad. In the nervous system it is expressed in sensory neurons and motor neurons in the ventral cord.

Its subcellular location is the cell membrane. Its function is as follows. Potential calcium-dependent cell-adhesion protein that controls axon guidance in the ventral cord. This is Cadherin-4 from Caenorhabditis elegans.